We begin with the raw amino-acid sequence, 195 residues long: Pyruvoyl-dependent arginine decarboxylase AaxB (195 aa).

Ser53 bears the Pyruvic acid (Ser) mark.

It belongs to the pyruvoyl-dependent arginine decarboxylase family. As to quaternary structure, trimer of an alpha-beta dimer. Pyruvate serves as cofactor.

It is found in the cytoplasm. It catalyses the reaction L-arginine + H(+) = agmatine + CO2. In terms of biological role, part of the AaxABC system, catalyzes the decarboxylation of L-arginine. The arginine uptake by the bacterium in the macrophage may be a virulence factor against the host innate immune response. This chain is Pyruvoyl-dependent arginine decarboxylase AaxB (aaxB), found in Chlamydia muridarum (strain MoPn / Nigg).